A 194-amino-acid polypeptide reads, in one-letter code: Large ribosomal subunit protein bL9 (194 aa).

Positions 169-194 are disordered; that stretch reads DDINDNARPENFFDPNAEFDGGEDNA.

The protein belongs to the bacterial ribosomal protein bL9 family.

Binds to the 23S rRNA. The sequence is that of Large ribosomal subunit protein bL9 from Mesorhizobium japonicum (strain LMG 29417 / CECT 9101 / MAFF 303099) (Mesorhizobium loti (strain MAFF 303099)).